Here is a 132-residue protein sequence, read N- to C-terminus: Small ribosomal subunit protein uS8 (132 aa).

This sequence belongs to the universal ribosomal protein uS8 family. In terms of assembly, part of the 30S ribosomal subunit. Contacts proteins S5 and S12.

Its function is as follows. One of the primary rRNA binding proteins, it binds directly to 16S rRNA central domain where it helps coordinate assembly of the platform of the 30S subunit. This Stenotrophomonas maltophilia (strain K279a) protein is Small ribosomal subunit protein uS8.